Consider the following 485-residue polypeptide: Membrane-bound lytic murein transglycosylase F (485 aa).

A signal peptide spans 1–29; sequence MFAHTALRQRCAKWLLATGLFLLLGACVE. Positions 30–267 are non-LT domain; the sequence is KPSTLERVKE…RLKDRYYGHV (238 aa). The LT domain stretch occupies residues 268–485; the sequence is DVLGYVGAYT…DKPADKSSPM (218 aa). Residue Glu314 is part of the active site. A disordered region spans residues 465–485; sequence EGNLHVPGVNKDKPADKSSPM. The segment covering 474-485 has biased composition (basic and acidic residues); it reads NKDKPADKSSPM.

The protein in the N-terminal section; belongs to the bacterial solute-binding protein 3 family. It in the C-terminal section; belongs to the transglycosylase Slt family.

It localises to the cell outer membrane. The enzyme catalyses Exolytic cleavage of the (1-&gt;4)-beta-glycosidic linkage between N-acetylmuramic acid (MurNAc) and N-acetylglucosamine (GlcNAc) residues in peptidoglycan, from either the reducing or the non-reducing ends of the peptidoglycan chains, with concomitant formation of a 1,6-anhydrobond in the MurNAc residue.. Murein-degrading enzyme that degrades murein glycan strands and insoluble, high-molecular weight murein sacculi, with the concomitant formation of a 1,6-anhydromuramoyl product. Lytic transglycosylases (LTs) play an integral role in the metabolism of the peptidoglycan (PG) sacculus. Their lytic action creates space within the PG sacculus to allow for its expansion as well as for the insertion of various structures such as secretion systems and flagella. The polypeptide is Membrane-bound lytic murein transglycosylase F (Pseudomonas putida (strain ATCC 47054 / DSM 6125 / CFBP 8728 / NCIMB 11950 / KT2440)).